A 931-amino-acid polypeptide reads, in one-letter code: G patch domain-containing protein 1 (931 aa).

Disordered stretches follow at residues 1–41, 73–92, and 169–209; these read MAAR…TVRD, PSTFVSSRQNRADKSVLGPE, and QGVG…EDDD. Ala-2 is modified (N-acetylalanine). Ser-6 and Ser-8 each carry phosphoserine. In terms of domain architecture, G-patch spans 152–198; it reads KLSVGFELLRKMGWKEGQGVGPRVKRRPRRQKPDPGVKIYGCALPPG. A Glycyl lysine isopeptide (Lys-Gly) (interchain with G-Cter in SUMO2) cross-link involves residue Lys-312. Residues Ser-357 and Ser-477 each carry the phosphoserine modification. Disordered regions lie at residues 568–595 and 659–931; these read RFTHAKEEDDSDQVEVPRDQENDVGDKQ and LPTT…LRRQ. Residues 582–593 show a composition bias toward basic and acidic residues; that stretch reads EVPRDQENDVGD. A compositionally biased stretch (polar residues) spans 659–668; that stretch reads LPTTQASSEK. Residues 669–695 show a composition bias toward basic and acidic residues; it reads VSQHRGPDKSRKPSRWDTSKHEKKEDS. Ser-715 carries the post-translational modification Phosphoserine. The segment covering 769–780 has biased composition (acidic residues); it reads SEDEQGDSEDDQ. Positions 786–802 are enriched in polar residues; sequence ANFQSSQDTDLGETSSV. Residues 852-888 show a composition bias toward basic residues; that stretch reads EKHKKNKDKHKAKKEHRRKKEKKKKHRKHKHKGKQKN. A compositionally biased stretch (low complexity) spans 896–905; that stretch reads SSESSDSSDS. Residues 922 to 931 show a composition bias toward basic residues; sequence RLKSLPLRRQ.

Belongs to the GPATCH1 family.

This Homo sapiens (Human) protein is G patch domain-containing protein 1 (GPATCH1).